The following is a 45-amino-acid chain: Natriuretic peptide OsNP-d (45 aa).

Residues proline 1–leucine 5 constitute a propeptide that is removed on maturation. Cysteines 14 and 30 form a disulfide.

Belongs to the natriuretic peptide family. In terms of tissue distribution, expressed by the venom gland.

The protein localises to the secreted. Snake venom natriuretic peptide that targets both NPR1 and NPR2. Exhibits hypotensive and vasodepressor activities. This chain is Natriuretic peptide OsNP-d, found in Oxyuranus scutellatus scutellatus (Australian taipan).